A 461-amino-acid polypeptide reads, in one-letter code: METLFNGSLTVGGRDQESTGFAWWSGNARLINLSGKLLGAHVAHAGLIVFWAGAMNLFEVAHFVPEKPMYEQGLILLPHIASLGYGVGPGGEIIDTFPYFVSGVLHLISSAVLGFGGIYHALIGPETLEESFPFFGYIWKDKNKMTTILGIHLILLGFGAWLLVWKAMYFGGVYDTWAAGGGDVRIISNPTTNPGVIFGYLLKSPFGGDGWICSVDNMEDLIGGHIWIGTLEIFGGIWHILTKPWGWARRAFVWSGEAYLSYSLAAISAMGFIACCMSWFNNTAYPSEFYGPTGPEASQAQAFTFLVRDQRLGANVASAQGPTGLGKYLMRSPTGEIIFGGETMRFWDFRGPWLEPLRGPNGLDLNKLKNDIQPWQERRSAEYMTHAPLGSLNSVGGVATEINSINYVSPRSWLATSHFCLGFFFFVGHLWHAGRARAAAAGFEKGIDRDTEPVLSMKPID.

A propeptide spanning residues 1–2 (ME) is cleaved from the precursor. Residue Thr-3 is modified to N-acetylthreonine. Thr-3 bears the Phosphothreonine mark. The next 5 helical transmembrane spans lie at 57–81 (LFEVAHFVPEKPMYEQGLILLPHIA), 122–143 (LIGPETLEESFPFFGYIWKDKN), 166–188 (KAMYFGGVYDTWAAGGGDVRIIS), 243–263 (KPWGWARRAFVWSGEAYLSYS), and 279–300 (WFNNTAYPSEFYGPTGPEASQA). Glu-355 is a binding site for [CaMn4O5] cluster. A helical membrane pass occupies residues 435–459 (RARAAAAGFEKGIDRDTEPVLSMKP).

Belongs to the PsbB/PsbC family. PsbC subfamily. In terms of assembly, PSII is composed of 1 copy each of membrane proteins PsbA, PsbB, PsbC, PsbD, PsbE, PsbF, PsbH, PsbI, PsbJ, PsbK, PsbL, PsbM, PsbT, PsbX, PsbY, PsbZ, Psb30/Ycf12, at least 3 peripheral proteins of the oxygen-evolving complex and a large number of cofactors. It forms dimeric complexes. It depends on Binds multiple chlorophylls and provides some of the ligands for the Ca-4Mn-5O cluster of the oxygen-evolving complex. It may also provide a ligand for a Cl- that is required for oxygen evolution. PSII binds additional chlorophylls, carotenoids and specific lipids. as a cofactor.

It localises to the plastid. Its subcellular location is the chloroplast thylakoid membrane. One of the components of the core complex of photosystem II (PSII). It binds chlorophyll and helps catalyze the primary light-induced photochemical processes of PSII. PSII is a light-driven water:plastoquinone oxidoreductase, using light energy to abstract electrons from H(2)O, generating O(2) and a proton gradient subsequently used for ATP formation. The polypeptide is Photosystem II CP43 reaction center protein (Oltmannsiellopsis viridis (Marine flagellate)).